The following is a 370-amino-acid chain: Glutamate 5-kinase (370 aa).

Residue lysine 13 participates in ATP binding. Substrate-binding residues include serine 54, aspartate 140, and asparagine 152. Residues 172 to 173 (SD) and 214 to 220 (SGGMVTK) each bind ATP. Positions 278-355 (TGTLVLDAGA…GEIEAILGFR (78 aa)) constitute a PUA domain.

It belongs to the glutamate 5-kinase family.

The protein resides in the cytoplasm. The catalysed reaction is L-glutamate + ATP = L-glutamyl 5-phosphate + ADP. It functions in the pathway amino-acid biosynthesis; L-proline biosynthesis; L-glutamate 5-semialdehyde from L-glutamate: step 1/2. Functionally, catalyzes the transfer of a phosphate group to glutamate to form L-glutamate 5-phosphate. This Paramagnetospirillum magneticum (strain ATCC 700264 / AMB-1) (Magnetospirillum magneticum) protein is Glutamate 5-kinase.